Reading from the N-terminus, the 302-residue chain is Putative S-adenosyl-L-methionine-dependent methyltransferase MAB_4586c (302 aa).

S-adenosyl-L-methionine contacts are provided by residues D122 and 151-152 (DL).

It belongs to the UPF0677 family.

Functionally, exhibits S-adenosyl-L-methionine-dependent methyltransferase activity. The sequence is that of Putative S-adenosyl-L-methionine-dependent methyltransferase MAB_4586c from Mycobacteroides abscessus (strain ATCC 19977 / DSM 44196 / CCUG 20993 / CIP 104536 / JCM 13569 / NCTC 13031 / TMC 1543 / L948) (Mycobacterium abscessus).